The following is a 527-amino-acid chain: tRNA (uracil(54)-C(5))-methyltransferase (527 aa).

One can recognise a TRAM domain in the interval 107–167 (PFERFQEIEV…DTYALADFLE (61 aa)). Positions 182, 188, 191, and 276 each coordinate [4Fe-4S] cluster. The S-adenosyl-L-methionine site is built by Q347, Y383, E404, and D451. C478 functions as the Nucleophile in the catalytic mechanism. The Proton acceptor role is filled by E517.

The protein belongs to the class I-like SAM-binding methyltransferase superfamily. RNA M5U methyltransferase family.

It carries out the reaction uridine(54) in tRNA + S-adenosyl-L-methionine = 5-methyluridine(54) in tRNA + S-adenosyl-L-homocysteine + H(+). Catalyzes the formation of 5-methyl-uridine at position 54 (m5U54) in all tRNA. May also have a role in tRNA stabilization or maturation. This chain is tRNA (uracil(54)-C(5))-methyltransferase, found in Schizosaccharomyces pombe (strain 972 / ATCC 24843) (Fission yeast).